The primary structure comprises 923 residues: Isoleucine--tRNA ligase (923 aa).

Residues 57–67 carry the 'HIGH' region motif; the sequence is PYANGDIHIGT. An L-isoleucyl-5'-AMP-binding site is contributed by E561. The 'KMSKS' region signature appears at 602–606; that stretch reads AMHKS. Position 605 (K605) interacts with ATP. Positions 895, 898, 915, and 918 each coordinate Zn(2+).

It belongs to the class-I aminoacyl-tRNA synthetase family. IleS type 1 subfamily. In terms of assembly, monomer. Requires Zn(2+) as cofactor.

The protein localises to the cytoplasm. The catalysed reaction is tRNA(Ile) + L-isoleucine + ATP = L-isoleucyl-tRNA(Ile) + AMP + diphosphate. Catalyzes the attachment of isoleucine to tRNA(Ile). As IleRS can inadvertently accommodate and process structurally similar amino acids such as valine, to avoid such errors it has two additional distinct tRNA(Ile)-dependent editing activities. One activity is designated as 'pretransfer' editing and involves the hydrolysis of activated Val-AMP. The other activity is designated 'posttransfer' editing and involves deacylation of mischarged Val-tRNA(Ile). This is Isoleucine--tRNA ligase from Brachyspira hyodysenteriae (strain ATCC 49526 / WA1).